The primary structure comprises 156 residues: Small ribosomal subunit protein uS7 (156 aa).

Belongs to the universal ribosomal protein uS7 family. In terms of assembly, part of the 30S ribosomal subunit. Contacts proteins S9 and S11.

Functionally, one of the primary rRNA binding proteins, it binds directly to 16S rRNA where it nucleates assembly of the head domain of the 30S subunit. Is located at the subunit interface close to the decoding center, probably blocks exit of the E-site tRNA. This Moorella thermoacetica (strain ATCC 39073 / JCM 9320) protein is Small ribosomal subunit protein uS7.